Here is a 136-residue protein sequence, read N- to C-terminus: Selenoprotein M (136 aa).

Residues 1–19 (MWLPLPLLLGLLQLQPILS) form the signal peptide. Residues Cys38 and Sec41 each act as nucleophile in the active site. The cysteinyl-selenocysteine (Cys-Sec) cross-link spans 38–41 (CGGU). Sec41 is a non-standard amino acid (selenocysteine). The interval 111–136 (SSPDAPVPAEFKMAPARASGDTKEDL) is disordered. Residues 133–136 (KEDL) carry the Prevents secretion from ER motif.

Belongs to the selenoprotein M/F family.

The protein resides in the endoplasmic reticulum. Its function is as follows. May function as a thiol-disulfide oxidoreductase that participates in disulfide bond formation. The polypeptide is Selenoprotein M (selenom) (Xenopus laevis (African clawed frog)).